We begin with the raw amino-acid sequence, 519 residues long: uncharacterized protein (519 aa).

13 consecutive transmembrane segments (helical) span residues 19-39 (FSSSVWSIVPALLAIILAIAT), 42-62 (VLVSLSAGIIIGSLMLSDWQI), 87-107 (MNIVLFLLLLGVLTALLTVSG), 128-148 (LLAASLVFVTFIDDYFHSLAV), 179-199 (VMMPVSSWGAYIITLIGGLLA), 220-240 (FYAIFSIIMVFFVAYFSFDIA), 270-290 (LILPILVLIIATVSMMIYTGA), 311-331 (VGTSLVVGGFCSIIISTLLII), 345-365 (WIVGIKSMSGAIAILFFAWTI), 386-406 (IPMQFLPVILFVLGAAMAFST), 413-433 (FGIMLPIAAAMAANAAPELLL), 475-495 (LPYAATVATATSIGYIVVGFT), and 496-516 (YSGLAGFAATAVSLIVIIFAV).

Its subcellular location is the cell membrane. This is an uncharacterized protein from Haemophilus influenzae (strain ATCC 51907 / DSM 11121 / KW20 / Rd).